The sequence spans 262 residues: 3-methyl-2-oxobutanoate hydroxymethyltransferase (262 aa).

Residues aspartate 43 and aspartate 82 each contribute to the Mg(2+) site. Residues 43–44 (DS), aspartate 82, and lysine 110 contribute to the 3-methyl-2-oxobutanoate site. Position 112 (glutamate 112) interacts with Mg(2+). Residue glutamate 179 is the Proton acceptor of the active site.

The protein belongs to the PanB family. Homodecamer; pentamer of dimers. Mg(2+) serves as cofactor.

The protein localises to the cytoplasm. The catalysed reaction is 3-methyl-2-oxobutanoate + (6R)-5,10-methylene-5,6,7,8-tetrahydrofolate + H2O = 2-dehydropantoate + (6S)-5,6,7,8-tetrahydrofolate. Its pathway is cofactor biosynthesis; (R)-pantothenate biosynthesis; (R)-pantoate from 3-methyl-2-oxobutanoate: step 1/2. In terms of biological role, catalyzes the reversible reaction in which hydroxymethyl group from 5,10-methylenetetrahydrofolate is transferred onto alpha-ketoisovalerate to form ketopantoate. The protein is 3-methyl-2-oxobutanoate hydroxymethyltransferase of Sodalis glossinidius (strain morsitans).